We begin with the raw amino-acid sequence, 729 residues long: ATP-dependent DNA helicase Hel308 (729 aa).

Residues Gln-28 and 46-53 (IPTASGKT) contribute to the ATP site. A Helicase ATP-binding domain is found at 33–199 (EKGLLEGRNL…WLEAELVVSE (167 aa)). Residues 144-147 (DEVH) carry the DEAH box motif. A Helicase C-terminal domain is found at 232–426 (AVNLALDTLK…SKLGTENALR (195 aa)). Residues 706–729 (SSGIIASEPPEKSPYSGQKTISDY) are disordered. Residues 720-729 (YSGQKTISDY) are compositionally biased toward polar residues.

The protein belongs to the helicase family. Hel308 subfamily. Monomer.

It catalyses the reaction Couples ATP hydrolysis with the unwinding of duplex DNA by translocating in the 3'-5' direction.. The catalysed reaction is ATP + H2O = ADP + phosphate + H(+). Functionally, DNA-dependent ATPase and 3'-5' DNA helicase that may be involved in repair of stalled replication forks. This is ATP-dependent DNA helicase Hel308 from Methanosarcina barkeri (strain Fusaro / DSM 804).